We begin with the raw amino-acid sequence, 273 residues long: Dermonecrotic toxin LarSicTox-alphaIB1aiv (273 aa).

H5 is a catalytic residue. 2 residues coordinate Mg(2+): E25 and D27. H41 (nucleophile) is an active-site residue. Cystine bridges form between C45-C51 and C47-C190. Position 85 (D85) interacts with Mg(2+). N-linked (GlcNAc...) asparagine glycosylation occurs at N250.

It belongs to the arthropod phospholipase D family. Class II subfamily. The cofactor is Mg(2+). As to expression, expressed by the venom gland.

The protein resides in the secreted. It catalyses the reaction an N-(acyl)-sphingosylphosphocholine = an N-(acyl)-sphingosyl-1,3-cyclic phosphate + choline. It carries out the reaction an N-(acyl)-sphingosylphosphoethanolamine = an N-(acyl)-sphingosyl-1,3-cyclic phosphate + ethanolamine. The enzyme catalyses a 1-acyl-sn-glycero-3-phosphocholine = a 1-acyl-sn-glycero-2,3-cyclic phosphate + choline. The catalysed reaction is a 1-acyl-sn-glycero-3-phosphoethanolamine = a 1-acyl-sn-glycero-2,3-cyclic phosphate + ethanolamine. Its function is as follows. Dermonecrotic toxins cleave the phosphodiester linkage between the phosphate and headgroup of certain phospholipids (sphingolipid and lysolipid substrates), forming an alcohol (often choline) and a cyclic phosphate. This toxin acts on sphingomyelin (SM). It may also act on ceramide phosphoethanolamine (CPE), lysophosphatidylcholine (LPC) and lysophosphatidylethanolamine (LPE), but not on lysophosphatidylserine (LPS), and lysophosphatidylglycerol (LPG). It acts by transphosphatidylation, releasing exclusively cyclic phosphate products as second products. Induces dermonecrosis, hemolysis, increased vascular permeability, edema, inflammatory response, and platelet aggregation. The chain is Dermonecrotic toxin LarSicTox-alphaIB1aiv from Loxosceles arizonica (Arizona brown spider).